The primary structure comprises 426 residues: Monocarboxylate transporter 13 (426 aa).

Topologically, residues Met1–Gly10 are cytoplasmic. Helical transmembrane passes span Gly11–Leu31, Val52–Ala72, Val83–Leu103, Leu106–Leu126, Leu139–Phe159, Leu172–Leu192, Val221–Leu241, Leu244–Val264, Leu283–Ala303, Gly306–Phe326, Ile338–Pro358, and Phe374–Phe394. Residues Phe395–Asp426 lie on the Cytoplasmic side of the membrane.

Belongs to the major facilitator superfamily. Monocarboxylate porter (TC 2.A.1.13) family.

Its subcellular location is the golgi apparatus membrane. The protein localises to the cell membrane. Proton-linked monocarboxylate transporter. May catalyze the transport of monocarboxylates across the plasma membrane. The sequence is that of Monocarboxylate transporter 13 (SLC16A13) from Bos taurus (Bovine).